A 73-amino-acid polypeptide reads, in one-letter code: MKKSLVLKASVAVATLVPMLSFAAEGDDPAKAAFNSLQASATEYIGYAWAMVVVIVGATIGIKLFKKFTSKAS.

The signal sequence occupies residues methionine 1 to alanine 23. The Periplasmic portion of the chain corresponds to alanine 24–tyrosine 47. Residues alanine 48–phenylalanine 68 form a helical membrane-spanning segment. At threonine 69–serine 73 the chain is on the cytoplasmic side.

The protein belongs to the inovirus capsid protein family. As to quaternary structure, homomultimerizes. There are about 2,700 copies of this protein in the phage capsid.

The protein resides in the virion. Its subcellular location is the host cell inner membrane. In terms of biological role, self assembles to form a helical capsid wrapping up the viral genomic DNA. The capsid displays a filamentous structure with a length of 760-1950 nm and a width of 6-8 nm. The virion assembly and budding take place at the host inner membrane. This chain is Capsid protein G8P (VIII), found in Enterobacteria phage M13 (Bacteriophage M13).